The sequence spans 455 residues: ATP-dependent protease ATPase subunit HslU (455 aa).

ATP-binding positions include V23, 65–70 (GVGKTE), D266, E333, and R405.

This sequence belongs to the ClpX chaperone family. HslU subfamily. In terms of assembly, a double ring-shaped homohexamer of HslV is capped on each side by a ring-shaped HslU homohexamer. The assembly of the HslU/HslV complex is dependent on binding of ATP.

It localises to the cytoplasm. ATPase subunit of a proteasome-like degradation complex; this subunit has chaperone activity. The binding of ATP and its subsequent hydrolysis by HslU are essential for unfolding of protein substrates subsequently hydrolyzed by HslV. HslU recognizes the N-terminal part of its protein substrates and unfolds these before they are guided to HslV for hydrolysis. The sequence is that of ATP-dependent protease ATPase subunit HslU from Xanthomonas axonopodis pv. citri (strain 306).